We begin with the raw amino-acid sequence, 88 residues long: Small ribosomal subunit protein bS16c (88 aa).

The protein belongs to the bacterial ribosomal protein bS16 family.

It is found in the plastid. The protein resides in the chloroplast. The chain is Small ribosomal subunit protein bS16c from Sinapis alba (White mustard).